A 319-amino-acid polypeptide reads, in one-letter code: Acetyl-coenzyme A carboxylase carboxyl transferase subunit alpha (319 aa).

The region spanning 35 to 296 (NIDEEVHRLR…KAQLLADLAD (262 aa)) is the CoA carboxyltransferase C-terminal domain.

It belongs to the AccA family. As to quaternary structure, acetyl-CoA carboxylase is a heterohexamer composed of biotin carboxyl carrier protein (AccB), biotin carboxylase (AccC) and two subunits each of ACCase subunit alpha (AccA) and ACCase subunit beta (AccD).

The protein localises to the cytoplasm. It carries out the reaction N(6)-carboxybiotinyl-L-lysyl-[protein] + acetyl-CoA = N(6)-biotinyl-L-lysyl-[protein] + malonyl-CoA. Its pathway is lipid metabolism; malonyl-CoA biosynthesis; malonyl-CoA from acetyl-CoA: step 1/1. Functionally, component of the acetyl coenzyme A carboxylase (ACC) complex. First, biotin carboxylase catalyzes the carboxylation of biotin on its carrier protein (BCCP) and then the CO(2) group is transferred by the carboxyltransferase to acetyl-CoA to form malonyl-CoA. The chain is Acetyl-coenzyme A carboxylase carboxyl transferase subunit alpha from Citrobacter koseri (strain ATCC BAA-895 / CDC 4225-83 / SGSC4696).